Consider the following 84-residue polypeptide: Small ribosomal subunit protein bS16 (84 aa).

Belongs to the bacterial ribosomal protein bS16 family.

The polypeptide is Small ribosomal subunit protein bS16 (Thioalkalivibrio sulfidiphilus (strain HL-EbGR7)).